Here is a 219-residue protein sequence, read N- to C-terminus: Cysteine dioxygenase (219 aa).

Residues histidine 106, histidine 108, and histidine 166 each coordinate Fe cation. The 3'-(S-cysteinyl)-tyrosine (Cys-Tyr) cross-link spans 113-183; the sequence is CVMKILHGSL…NDFAISLHLY (71 aa).

Belongs to the cysteine dioxygenase family. Requires Fe cation as cofactor. Post-translationally, the thioether cross-link between Cys-113 and Tyr-183 plays a structural role through stabilizing the Fe(2+) ion, and prevents the production of highly damaging free hydroxyl radicals by holding the oxygen radical via hydroxyl hydrogen.

The enzyme catalyses L-cysteine + O2 = 3-sulfino-L-alanine + H(+). Functionally, cysteine dioxygenase involved in sulfite formation from cysteine. Required for keratin degradation and plays an important role in filamentous growth and virulence. This Arthroderma benhamiae (Trichophyton mentagrophytes) protein is Cysteine dioxygenase.